The chain runs to 543 residues: Nucleoside-triphosphatase ntp-1 (543 aa).

Residues 40 to 60 traverse the membrane as a helical segment; sequence VYGFLLTCTCLLLILTIIPMS. The active-site Proton acceptor is the glutamate 212. A helical transmembrane segment spans residues 497–517; it reads QISNFFSFFVILIIVLAVALY.

The protein belongs to the GDA1/CD39 NTPase family.

The protein localises to the golgi apparatus membrane. It catalyses the reaction a ribonucleoside 5'-triphosphate + H2O = a ribonucleoside 5'-diphosphate + phosphate + H(+). In terms of biological role, seems to be able to hydrolyze CTP, ATP and UTP. This is Nucleoside-triphosphatase ntp-1 from Caenorhabditis elegans.